Reading from the N-terminus, the 340-residue chain is Gallate dioxygenase (340 aa).

Catalysis depends on H45, which acts as the Proton donor. H113 serves as the catalytic Proton acceptor.

It belongs to the LigB/MhpB extradiol dioxygenase family. Fe(2+) is required as a cofactor.

The catalysed reaction is 3,4,5-trihydroxybenzoate + O2 = (1E)-4-oxobut-1-ene-1,2,4-tricarboxylate + 2 H(+). Ring-cleavage dioxygenase that acts specifically on gallate to produce the keto-tautomer of 4-oxalomesaconate. Mediates the first step of gallate degradation pathway. This is Gallate dioxygenase (galA) from Pseudomonas putida (strain ATCC 47054 / DSM 6125 / CFBP 8728 / NCIMB 11950 / KT2440).